The following is a 265-amino-acid chain: Selenoprotein Pb (265 aa).

An N-terminal signal peptide occupies residues 1–18; the sequence is MQALWPLLLSALPALLGA. Residue Asn-28 is glycosylated (N-linked (GlcNAc...) asparagine). A non-standard amino acid (selenocysteine) is located at residue Sec-64. Asn-88, Asn-178, Asn-184, and Asn-207 each carry an N-linked (GlcNAc...) asparagine glycan. The interval 188 to 265 is disordered; sequence SESSDSTKND…SHQEHVHNHR (78 aa). Positions 201–211 are enriched in polar residues; sequence ENNQRPNSTEP. The segment covering 215–231 has biased composition (basic residues); it reads AHHHHHQQHEPHHHHHN. The span at 239-265 shows a compositional bias: basic and acidic residues; that stretch reads KSGDSDVTGKPKEPPHHSHQEHVHNHR.

Its subcellular location is the secreted. Functionally, might be responsible for some of the extracellular antioxidant defense properties of selenium. The protein is Selenoprotein Pb (sepp1b) of Danio rerio (Zebrafish).